The sequence spans 262 residues: MSHISLNICKDIFCGFFDSVRIDIAIKKLYNDQKLQKKIIKIAKFNTIMYLVPYIITYTVLNTFDYDLFSIINIVYLFVNVISGLFHLLYFIDLIDIVCVYTKKLNRPISKLDSIGLAIVSFVYQLSMYIIMELIDMMLYKKLDVVSYLIKFIILTLYHSFCCFNNLWHYKNIDIHHRISLHEKLWAYYLGYGTIASLMYIYSNHPLMIYTYNIYMSILIILPFMIKTKYPKKQAYPSINLKIFSIIVGYFNYAIKLINNSN.

7 consecutive transmembrane segments (helical) span residues 42–62 (IAKF…TVLN), 71–91 (IINI…LLYF), 115–135 (IGLA…MELI), 145–165 (VVSY…CCFN), 185–205 (LWAY…YSNH), 206–226 (PLMI…PFMI), and 235–255 (AYPS…NYAI).

The protein resides in the membrane. This is an uncharacterized protein from Acanthamoeba polyphaga mimivirus (APMV).